An 86-amino-acid polypeptide reads, in one-letter code: Large ribosomal subunit protein bL27 (86 aa).

The segment at Met-1–Gly-22 is disordered.

Belongs to the bacterial ribosomal protein bL27 family.

The polypeptide is Large ribosomal subunit protein bL27 (Rickettsia bellii (strain RML369-C)).